The primary structure comprises 313 residues: Porphobilinogen deaminase (313 aa).

Cys242 is subject to S-(dipyrrolylmethanemethyl)cysteine.

Belongs to the HMBS family. Monomer. It depends on dipyrromethane as a cofactor.

The enzyme catalyses 4 porphobilinogen + H2O = hydroxymethylbilane + 4 NH4(+). It participates in porphyrin-containing compound metabolism; protoporphyrin-IX biosynthesis; coproporphyrinogen-III from 5-aminolevulinate: step 2/4. Its function is as follows. Tetrapolymerization of the monopyrrole PBG into the hydroxymethylbilane pre-uroporphyrinogen in several discrete steps. The protein is Porphobilinogen deaminase of Pseudomonas putida (strain ATCC 700007 / DSM 6899 / JCM 31910 / BCRC 17059 / LMG 24140 / F1).